A 259-amino-acid polypeptide reads, in one-letter code: Pimeloyl-[acyl-carrier protein] methyl ester esterase (259 aa).

Substrate is bound by residues Trp18, 78-79, and 139-143; these read SL and FLALD. The Nucleophile role is filled by Ser78. Catalysis depends on residues Asp203 and His231. Residue His231 coordinates substrate.

The protein belongs to the AB hydrolase superfamily. Carboxylesterase BioH family. As to quaternary structure, monomer.

Its subcellular location is the cytoplasm. The enzyme catalyses 6-carboxyhexanoyl-[ACP] methyl ester + H2O = 6-carboxyhexanoyl-[ACP] + methanol + H(+). The protein operates within cofactor biosynthesis; biotin biosynthesis. The physiological role of BioH is to remove the methyl group introduced by BioC when the pimeloyl moiety is complete. It allows to synthesize pimeloyl-ACP via the fatty acid synthetic pathway through the hydrolysis of the ester bonds of pimeloyl-ACP esters. The protein is Pimeloyl-[acyl-carrier protein] methyl ester esterase of Stenotrophomonas maltophilia (strain K279a).